The chain runs to 130 residues: Type VII secretion system extracellular protein C (130 aa).

This sequence belongs to the EsxC family. In terms of assembly, forms both homodimers and heterodimers with EsxA. Homodimerization is calcium-dependent.

It localises to the secreted. In Staphylococcus aureus (strain USA300), this protein is Type VII secretion system extracellular protein C.